The chain runs to 408 residues: S-adenosylmethionine synthase (408 aa).

ATP is bound at residue 140–145 (GQGSVD).

The protein belongs to the AdoMet synthase 2 family. Mg(2+) is required as a cofactor.

It carries out the reaction L-methionine + ATP + H2O = S-adenosyl-L-methionine + phosphate + diphosphate. The protein operates within amino-acid biosynthesis; S-adenosyl-L-methionine biosynthesis; S-adenosyl-L-methionine from L-methionine: step 1/1. In terms of biological role, catalyzes the formation of S-adenosylmethionine from methionine and ATP. In Caldivirga maquilingensis (strain ATCC 700844 / DSM 13496 / JCM 10307 / IC-167), this protein is S-adenosylmethionine synthase.